Reading from the N-terminus, the 170-residue chain is Ribosome maturation factor RimM (170 aa).

Residues 93–165 enclose the PRC barrel domain; the sequence is PDEFHDHELI…RVVIDPPPGL (73 aa).

Belongs to the RimM family. As to quaternary structure, binds ribosomal protein uS19.

The protein localises to the cytoplasm. In terms of biological role, an accessory protein needed during the final step in the assembly of 30S ribosomal subunit, possibly for assembly of the head region. Essential for efficient processing of 16S rRNA. May be needed both before and after RbfA during the maturation of 16S rRNA. It has affinity for free ribosomal 30S subunits but not for 70S ribosomes. This is Ribosome maturation factor RimM from Thermobifida fusca (strain YX).